A 651-amino-acid chain; its full sequence is MLRSSLGSVCLACRISGNAGAAPGAVAYRPQLSTAIRGSTIQLQSSLSFSTSNARQATRRERTPSRMVLSDRVGRSTARDGDKKPRRRVDGPFAGMNRTVANFDPETRSKLSRDNSNNNRSSKNGREGGKKLGRDGKGFKALNMQRSLASIGYGHRTTVKAKMQEVDSFDQFDLLPQVKDAVLNEALKGMLDIKPTPVQRLAIPALLGQTTGARSRWRTKSKPADSGSEAASPDAPPPPREEFLLAAETGSGKTLAYLVPAFNALKEAEASDPDIIAYNQRRAEERALLAKNPGSKIKTRPEPHPTMSRPRVVILVPTAELVDQVGRVAKSLSHVAKARTRMISANMSATMIENDVFSPAGIDILISTPHLLASIAESHPNILSRVSHLVVDEADSLLDRSFSEVTTPIIDRALPSIRQLVLCSATIPRRLDNYLASRFPNMRRITTPNLHAIPRRVQLGVIDVARDPYRGNKNIACADAIWSIGKEAGRHEGPVKGQVDVRRIMVFVNEREKTQEVAEYLKSKGIDAVALHRDTSEERQSEMLASFTSNETMSIPTPEGGVAGSPRSSRTLPNTKVIVATDLASRGIDTLAVRHVVLYDVPHTTIDFIHRLGRAGRMGRRGRGIVLVGNDDRKDIVAEVKESMFMGQALV.

The N-terminal 61 residues, 1 to 61 (MLRSSLGSVC…SNARQATRRE (61 aa)), are a transit peptide targeting the mitochondrion. Positions 45–56 (SSLSFSTSNARQ) are enriched in polar residues. The interval 45–137 (SSLSFSTSNA…GGKKLGRDGK (93 aa)) is disordered. 2 stretches are compositionally biased toward basic and acidic residues: residues 72–83 (RVGRSTARDGDK) and 124–137 (NGRE…RDGK). The Q motif motif lies at 167–200 (DSFDQFDLLPQVKDAVLNEALKGMLDIKPTPVQR). A disordered region spans residues 210 to 241 (TTGARSRWRTKSKPADSGSEAASPDAPPPPRE). A compositionally biased stretch (low complexity) spans 224-233 (ADSGSEAASP). The Helicase ATP-binding domain maps to 234–445 (DAPPPPREEF…ASRFPNMRRI (212 aa)). 247–254 (AETGSGKT) is an ATP binding site. Positions 392–395 (DEAD) match the DEAD box motif. A Helicase C-terminal domain is found at 494–651 (PVKGQVDVRR…ESMFMGQALV (158 aa)).

Belongs to the DEAD box helicase family. MRH4 subfamily.

The protein localises to the mitochondrion. It carries out the reaction ATP + H2O = ADP + phosphate + H(+). Functionally, ATP-binding RNA helicase involved in mitochondrial RNA metabolism. Required for maintenance of mitochondrial DNA. In Pyricularia oryzae (strain 70-15 / ATCC MYA-4617 / FGSC 8958) (Rice blast fungus), this protein is ATP-dependent RNA helicase MRH4, mitochondrial (MRH4).